The primary structure comprises 503 residues: Glycerol kinase (503 aa).

Threonine 17 is an ADP binding site. ATP is bound by residues threonine 17, threonine 18, and serine 19. Threonine 17 is a sn-glycerol 3-phosphate binding site. Arginine 21 contacts ADP. Arginine 87, glutamate 88, tyrosine 141, and aspartate 245 together coordinate sn-glycerol 3-phosphate. Glycerol-binding residues include arginine 87, glutamate 88, tyrosine 141, aspartate 245, and glutamine 246. ADP-binding residues include threonine 267 and glycine 310. Residues threonine 267, glycine 310, glutamine 314, and glycine 411 each coordinate ATP. ADP contacts are provided by glycine 411 and asparagine 415.

It belongs to the FGGY kinase family.

It carries out the reaction glycerol + ATP = sn-glycerol 3-phosphate + ADP + H(+). Its pathway is polyol metabolism; glycerol degradation via glycerol kinase pathway; sn-glycerol 3-phosphate from glycerol: step 1/1. Its activity is regulated as follows. Inhibited by fructose 1,6-bisphosphate (FBP). Functionally, key enzyme in the regulation of glycerol uptake and metabolism. Catalyzes the phosphorylation of glycerol to yield sn-glycerol 3-phosphate. This chain is Glycerol kinase, found in Pseudomonas tolaasii.